A 584-amino-acid chain; its full sequence is Glycosyltransferase family 92 protein Os08g0121900 (584 aa).

Over residues 1–10 (MALAAKERKL) the composition is skewed to basic and acidic residues. Positions 1 to 33 (MALAAKERKLSRLGSKGSGGGGGGGSFGARGQR) are disordered. Gly residues predominate over residues 16–28 (KGSGGGGGGGSFG). A helical transmembrane segment spans residues 43–63 (FAAFFAFLFAGAVLFGAAHVI). The GT92 domain occupies 314-525 (HSMCVCTMLR…DKFSGRVATY (212 aa)).

Belongs to the glycosyltransferase 92 family.

The protein resides in the membrane. The polypeptide is Glycosyltransferase family 92 protein Os08g0121900 (Oryza sativa subsp. japonica (Rice)).